Consider the following 73-residue polypeptide: Translational regulator CsrA (73 aa).

It belongs to the CsrA/RsmA family. Homodimer; the beta-strands of each monomer intercalate to form a hydrophobic core, while the alpha-helices form wings that extend away from the core.

The protein localises to the cytoplasm. In terms of biological role, a translational regulator that binds mRNA to regulate translation initiation and/or mRNA stability. Usually binds in the 5'-UTR at or near the Shine-Dalgarno sequence preventing ribosome-binding, thus repressing translation. Its main target seems to be the major flagellin gene, while its function is anatagonized by FliW. The polypeptide is Translational regulator CsrA (Clostridium kluyveri (strain NBRC 12016)).